The chain runs to 887 residues: Putative RNA-binding protein 15B (887 aa).

Residues 1–132 (MKRQSERDSS…EPAGPGSTAA (132 aa)) are disordered. Residues 10–20 (SPSGRGSSSSA) show a composition bias toward low complexity. Basic and acidic residues-rich tracts occupy residues 22 to 34 (RPREREREAEAGG) and 65 to 77 (GHRDGRAAGDANH). Over residues 83–94 (RSSGAPGGGGRT) the composition is skewed to gly residues. A compositionally biased stretch (low complexity) spans 95-110 (GKASGDPGAGGASPRA). Residues S107 and S111 each carry the phosphoserine modification. Over residues 111 to 122 (SPLPPPPPPPGA) the composition is skewed to pro residues. Low complexity predominate over residues 123 to 132 (EPAGPGSTAA). Residues 136-216 (KTLLISSLSP…RPLKVEPVYL (81 aa)) enclose the RRM 1 domain. Residue K210 forms a Glycyl lysine isopeptide (Lys-Gly) (interchain with G-Cter in SUMO2) linkage. Positions 215–249 (YLRGGGSSRRSSSSSAAASTPPPGPPAPADPLGYL) are disordered. Residues 222–233 (SRRSSSSSAAAS) are compositionally biased toward low complexity. A compositionally biased stretch (pro residues) spans 234–243 (TPPPGPPAPA). S261 and S263 each carry phosphoserine. 2 consecutive RRM domains span residues 333–410 (RNLF…YGKA) and 414–488 (TRLW…FAKA). The residue at position 529 (T529) is a Phosphothreonine. Residues S549, S553, and S559 each carry the phosphoserine modification. The disordered stretch occupies residues 549 to 703 (SLSKSSDRRN…TLEEPKHETK (155 aa)). Basic and acidic residues-rich tracts occupy residues 570 to 613 (RSGE…ERSR), 623 to 643 (RGSDRTPERSRKENHSSEGTK), and 668 to 700 (EAPDSSHGKKTRESERNHRTTEAEPKTLEEPKH). A Nuclear localization signal motif is present at residues 590 to 594 (RRKRR). A Glycyl lysine isopeptide (Lys-Gly) (interchain with G-Cter in SUMO2) cross-link involves residue K699. The 179-residue stretch at 708–886 (LSEYAQTLQL…HMVIVIVRDT (179 aa)) folds into the SPOC domain. Residues 719–887 (WNGLLVLKNS…MVIVIVRDTA (169 aa)) are interaction with Epstein-Barr virus BMLF1.

Belongs to the RRM Spen family. Component of the WMM complex, a N6-methyltransferase complex composed of a catalytic subcomplex, named MAC, and of an associated subcomplex, named MACOM. The MAC subcomplex is composed of METTL3 and METTL14. The MACOM subcomplex is composed of WTAP, ZC3H13, CBLL1/HAKAI, VIRMA, and, in some cases of RBM15 (RBM15 or RBM15B). May interact with NCOR2. Interacts with NXF1, the interaction is required to promote mRNA export.

The protein localises to the nucleus. It localises to the nucleoplasm. It is found in the nucleus speckle. The protein resides in the nucleus envelope. RNA-binding protein that acts as a key regulator of N6-methyladenosine (m6A) methylation of RNAs, thereby regulating different processes, such as alternative splicing of mRNAs and X chromosome inactivation mediated by Xist RNA. Associated component of the WMM complex, a complex that mediates N6-methyladenosine (m6A) methylation of RNAs, a modification that plays a role in the efficiency of mRNA splicing and RNA processing. Plays a key role in m6A methylation, possibly by binding target RNAs and recruiting the WMM complex. Involved in random X inactivation mediated by Xist RNA: acts by binding Xist RNA and recruiting the WMM complex, which mediates m6A methylation, leading to target YTHDC1 reader on Xist RNA and promoting transcription repression activity of Xist. Functions in the regulation of alternative or illicit splicing, possibly by regulating m6A methylation. Inhibits pre-mRNA splicing. Also functions as a mRNA export factor by acting as a cofactor for the nuclear export receptor NXF1. This is Putative RNA-binding protein 15B (Rbm15b) from Mus musculus (Mouse).